A 525-amino-acid chain; its full sequence is Lysine--tRNA ligase (525 aa).

2 residues coordinate Mg(2+): E430 and E437.

This sequence belongs to the class-II aminoacyl-tRNA synthetase family. In terms of assembly, homodimer. Mg(2+) is required as a cofactor.

It localises to the cytoplasm. It carries out the reaction tRNA(Lys) + L-lysine + ATP = L-lysyl-tRNA(Lys) + AMP + diphosphate. The sequence is that of Lysine--tRNA ligase from Chlamydia caviae (strain ATCC VR-813 / DSM 19441 / 03DC25 / GPIC) (Chlamydophila caviae).